The chain runs to 1101 residues: MKSRQKGKKKGSSKERVFGCDLREHLQHSGQEVPQVLRSCAEFVQEYGVVDGIYRLSGVSSNIQKLRQEFETERKPDLRRDVYLQDIHCVSSLCKAYFRELPDPLLTYRLYDKFAEAVAVQLEPERLVKILEVLQELPIQNYRTLEFLMRHLVHMASFSAQTNMHARNLAIVWAPNLLRSKDIEASGFNGTAAFMEVRVQSIVVEFILTHVDQLFRGDSLSAGVDLESGWKSLPGARASGSSEDLMPTSLPYHLPSILQAGDGPPQIRPYHTIIEIAEHKRKGSLKVRKWRSIFNLGRSGHETKRKLPLRVEDREEKSSKGTLRPAKSMDSLSAAAGASDEPEGLVGSSSSQPSSLMPESLESNSMEGEQEPEAEAPGSANSEPGTPRAGRSAVRALGSSRAERCAGVHISDPYNVNLPLHITSILSVPPNIISNVSLVRLTRGLECPALQPRPSPALGPGPPGSVGPLASDEKSEARSVPGPLDDSSPAAMTPALEDSLSQEVQDSFSFLEDLSSSEPEWVGVEEREVAKAEAAGAAGAAAFSLGEDDPGMGYLEELLRVGPQVEEFSVEPPLDDLSLDDTQYVLAPNCCSLDSAVSTPDVEEDYGEEVFLSAYDDLSPLLGPKPINWEGVGSLEEEAAGCGKQPPTQDEEEQACSETRQEKEAKPRSTSDNREEAEATPETEMEAGKADAEGGEAERSQKVMDSFKEGSREELEAKEENSEGREVESIKETKDVEKIIGEPGKDEEREIGREEGAEKGDDTPVDSDMDPEHVFQEDLVLEESWEVVHKHEAEKGRESETKELRRKSDLKSREDQGHSEDSGSPEEGDDRKEGVFSKEQKSIDVETEVMRGVGDHLEEGALSEGPGVELLRVDSTEEINEQTSEMKQAPLQPSEPEGMEAEGQLNPETCDLYSCPCGSAGGVGMRLASTLVQVRQVRSVPVVPPKPQFAKMPSAMCSKIHVAPASPCPRPGRLDGTPGEKAWGSRASWRNGGSLSFDAAVALARERQRTESQGVLRTQTCTGGGDYSLSSRTPPCSMILAHSSRPLSCLERPPEGTEGSEPRSRLSLPPRELHPVVPLVAPQRQTYAFETQTNHGKDEGV.

Residues 20 to 215 (CDLREHLQHS…FILTHVDQLF (196 aa)) enclose the Rho-GAP domain. 2 disordered regions span residues 305–397 (RKLP…VRAL) and 450–499 (LQPR…LEDS). Basic and acidic residues predominate over residues 309 to 319 (LRVEDREEKSS). Low complexity predominate over residues 348 to 367 (SSSSQPSSLMPESLESNSME). The segment covering 451–465 (QPRPSPALGPGPPGS) has biased composition (pro residues). S578 carries the phosphoserine modification. Residues 622 to 848 (LGPKPINWEG…EQKSIDVETE (227 aa)) are disordered. 4 stretches are compositionally biased toward basic and acidic residues: residues 659 to 677 (TRQE…REEA), 686 to 762 (EAGK…KGDD), 786 to 821 (EVVH…HSED), and 829 to 844 (DDRK…KSID). Residue S875 is modified to Phosphoserine. Disordered regions lie at residues 878–901 (EINE…GMEA) and 968–987 (CPRP…GSRA). Phosphoserine is present on S996. The disordered stretch occupies residues 1044–1076 (SRPLSCLERPPEGTEGSEPRSRLSLPPRELHPV). Basic and acidic residues predominate over residues 1052–1064 (RPPEGTEGSEPRS).

In terms of assembly, interacts with RHOU in a GTP-independent manner.

The protein resides in the cytoplasmic vesicle. GTPase-activating protein (GAP) for RAC1 and RHOA, but not for CDC42. The chain is Rho GTPase-activating protein 30 (Arhgap30) from Mus musculus (Mouse).